Reading from the N-terminus, the 284-residue chain is 4-diphosphocytidyl-2-C-methyl-D-erythritol kinase (284 aa).

Lys14 is a catalytic residue. 98-108 (PMGGGLGGGSS) lines the ATP pocket. Asp140 is an active-site residue.

Belongs to the GHMP kinase family. IspE subfamily.

It carries out the reaction 4-CDP-2-C-methyl-D-erythritol + ATP = 4-CDP-2-C-methyl-D-erythritol 2-phosphate + ADP + H(+). Its pathway is isoprenoid biosynthesis; isopentenyl diphosphate biosynthesis via DXP pathway; isopentenyl diphosphate from 1-deoxy-D-xylulose 5-phosphate: step 3/6. In terms of biological role, catalyzes the phosphorylation of the position 2 hydroxy group of 4-diphosphocytidyl-2C-methyl-D-erythritol. The protein is 4-diphosphocytidyl-2-C-methyl-D-erythritol kinase of Shewanella oneidensis (strain ATCC 700550 / JCM 31522 / CIP 106686 / LMG 19005 / NCIMB 14063 / MR-1).